Here is a 236-residue protein sequence, read N- to C-terminus: Serine/arginine-rich SC35-like splicing factor SCL28 (236 aa).

Disordered stretches follow at residues 1–53 (MARA…LIRN) and 124–219 (EENR…RVLT). Basic and acidic residues predominate over residues 14 to 43 (RPRDRSPPRERKGYDDNRLRERPSSRDHES). One can recognise an RRM domain in the interval 47 to 125 (SGLLIRNLPL…REIAIVFAEE (79 aa)). Basic residues predominate over residues 149–176 (TSHRSPRRRYRSHSRSRSPPRRESRHSK). Phosphoserine is present on S184. The segment covering 199-217 (RNEREYKSRNCRSPREERV) has biased composition (basic and acidic residues).

The protein belongs to the splicing factor SR family. SCL subfamily. As to quaternary structure, component of the spliceosome. Interacts with RS2Z33, CYP59, CYP63 and CYP95.

Its subcellular location is the nucleus speckle. In terms of biological role, involved in intron recognition and spliceosome assembly. Probably active at the 5' splice sites. The protein is Serine/arginine-rich SC35-like splicing factor SCL28 (SCL28) of Arabidopsis thaliana (Mouse-ear cress).